The chain runs to 216 residues: Large ribosomal subunit protein uL3 (216 aa).

The residue at position 157 (Q157) is an N5-methylglutamine.

Belongs to the universal ribosomal protein uL3 family. In terms of assembly, part of the 50S ribosomal subunit. Forms a cluster with proteins L14 and L19. Methylated by PrmB.

Its function is as follows. One of the primary rRNA binding proteins, it binds directly near the 3'-end of the 23S rRNA, where it nucleates assembly of the 50S subunit. The chain is Large ribosomal subunit protein uL3 from Stenotrophomonas maltophilia (strain R551-3).